Here is a 35-residue protein sequence, read N- to C-terminus: UPF0387 membrane protein YohO (35 aa).

The chain crosses the membrane as a helical span at residues 6–26 (IGVIALFLFMALGGIGGVMLA).

It belongs to the UPF0387 family.

Its subcellular location is the cell inner membrane. The chain is UPF0387 membrane protein YohO from Shigella boydii serotype 4 (strain Sb227).